Reading from the N-terminus, the 343-residue chain is MTSFLRSDRSRPVAIWLFIVAAMVFAMVVVGGATRLTDSGLSITEWQPIMGALPPMSEQAWRESFELYKQIPQFQLVNPDMTLEGYKEIFWWEWAHRLLGRTVGAVYAIPLIVFLIRRDIPRRLIWRCAAMLGLGGLQGLVGWWMVSSGLSERVSVAPERLMTHLGLALALFVLLIWTALDAWNGSPRVEERSPWRGWALAFLGAVFFQSLLGALVAGNDAGFVYNDWPLMNGRFFPGDYGGAGLWGTLAHSQAAVQFNHRIFAYALLLAAVVLVVLARRDRLLVGQGKSLATAVAAVVFLQAALGVWTLMAAVPISLGVLHQAGAAVLLAVATAFAWRVRRP.

The next 8 membrane-spanning stretches (helical) occupy residues valine 13–alanine 33, histidine 96–isoleucine 116, alanine 130–leucine 150, leucine 161–aspartate 181, glycine 197–alanine 217, phenylalanine 258–alanine 278, alanine 294–valine 314, and leucine 318–tryptophan 338. Histidine 260 contributes to the heme binding site. Histidine 322 contributes to the heme binding site.

Belongs to the COX15/CtaA family. Type 2 subfamily. As to quaternary structure, interacts with CtaB. It depends on heme b as a cofactor.

It is found in the cell membrane. It catalyses the reaction Fe(II)-heme o + 2 A + H2O = Fe(II)-heme a + 2 AH2. The protein operates within porphyrin-containing compound metabolism; heme A biosynthesis; heme A from heme O: step 1/1. Its function is as follows. Catalyzes the conversion of heme O to heme A by two successive hydroxylations of the methyl group at C8. The first hydroxylation forms heme I, the second hydroxylation results in an unstable dihydroxymethyl group, which spontaneously dehydrates, resulting in the formyl group of heme A. This chain is Heme A synthase, found in Caulobacter vibrioides (strain ATCC 19089 / CIP 103742 / CB 15) (Caulobacter crescentus).